The following is a 271-amino-acid chain: Cyclic AMP-dependent transcription factor ATF-1 (271 aa).

A disordered region spans residues 1–61 (MEDSHKSTTS…QKAHGILARR (61 aa)). One can recognise a KID domain in the interval 31-90 (QVSSLSESEESQDSSDSIGSSQKAHGILARRPSYRKILKDLSSEDTRGRKGDGENSGVSA). Phosphoserine; by CaMK1, CDK3, RPS6KA4 and RPS6KA5 is present on Ser63. The residue at position 198 (Ser198) is a Phosphoserine; by HIPK2. Glycyl lysine isopeptide (Lys-Gly) (interchain with G-Cter in SUMO2) cross-links involve residues Lys208 and Lys215. Residues 213–271 (QLKREIRLMKNREAARECRRKKKEYVKCLENRVAVLENQNKTLIEELKTLKDLYSNKSV) form the bZIP domain. The tract at residues 215–239 (KREIRLMKNREAARECRRKKKEYVK) is basic motif. The leucine-zipper stretch occupies residues 241-262 (LENRVAVLENQNKTLIEELKTL).

It belongs to the bZIP family. ATF subfamily. As to quaternary structure, binds DNA as a dimer. Interacts with HIPK2 and CDK3. Interacts with MOTS-c, a peptide produced by the mitochondrially encoded 12S rRNA MT-RNR1; the interaction occurs in the nucleus following metabolic stress. In terms of processing, phosphorylated at Ser-198 by HIPK2 in response to genotoxic stress. This phosphorylation promotes transcription repression of FTH1 and other antioxidant detoxification genes. The CDK3-mediated phosphorylation at Ser-63 promotes its transactivation and transcriptional activities. Phosphorylated at Ser-63 by RPS6KA4 and RPS6KA5 in response to mitogenic or stress stimuli.

It is found in the nucleus. Its function is as follows. This protein binds the cAMP response element (CRE) (consensus: 5'-GTGACGT[AC][AG]-3'), a sequence present in many viral and cellular promoters. Binds to the Tax-responsive element (TRE) of HTLV-I. Mediates PKA-induced stimulation of CRE-reporter genes. Represses the expression of FTH1 and other antioxidant detoxification genes. Triggers cell proliferation and transformation. In Homo sapiens (Human), this protein is Cyclic AMP-dependent transcription factor ATF-1 (ATF1).